Consider the following 702-residue polypeptide: Elongation factor G 2 (702 aa).

In terms of domain architecture, tr-type G spans 8–291 (ELYRNIGIVA…AVIDYLPAPS (284 aa)). GTP is bound by residues 17–24 (AHVDAGKT), 89–93 (DTPGH), and 143–146 (NKMD). The interval 293-314 (IPAIRGTDPDDEEKHDERHADD) is disordered.

This sequence belongs to the TRAFAC class translation factor GTPase superfamily. Classic translation factor GTPase family. EF-G/EF-2 subfamily.

The protein localises to the cytoplasm. Functionally, catalyzes the GTP-dependent ribosomal translocation step during translation elongation. During this step, the ribosome changes from the pre-translocational (PRE) to the post-translocational (POST) state as the newly formed A-site-bound peptidyl-tRNA and P-site-bound deacylated tRNA move to the P and E sites, respectively. Catalyzes the coordinated movement of the two tRNA molecules, the mRNA and conformational changes in the ribosome. The polypeptide is Elongation factor G 2 (fusB) (Pseudomonas aeruginosa (strain ATCC 15692 / DSM 22644 / CIP 104116 / JCM 14847 / LMG 12228 / 1C / PRS 101 / PAO1)).